Reading from the N-terminus, the 96-residue chain is Cytoplasmic envelopment protein 3 (96 aa).

The N-myristoyl glycine; by host moiety is linked to residue glycine 2. The Di-leucine-like internalization motif motif lies at 18–19 (LI). The segment at 37–43 (DIESEEE) is asp/Glu-rich (acidic). Serine 40 bears the Phosphoserine mark. The disordered stretch occupies residues 57-96 (RAPGRQRLRSSDPPSRHTHRRTPGGACPATQFPPPMSDSE). Over residues 87-96 (QFPPPMSDSE) the composition is skewed to pro residues.

The protein belongs to the herpesviridae cytoplasmic envelopment protein 3 family. Interacts with cytoplasmic envelopment protein 2; this interaction is essential for the proper localization of each protein to the assembly complex and thus for the production of infectious virus. Interacts with gE (via C-terminus). Interacts with gD (via C-terminus). Interacts with UL56. In terms of processing, myristoylation and palmitoylation (probably on one or more of the nearby cysteines at the N-terminus) enable membrane-binding and Golgi apparatus-specific targeting and are essential for efficient packaging. Post-translationally, phosphorylated. Phosphorylation does not seem to be required for recycling to the host Golgi apparatus. Packaging is selective for underphosphorylated forms.

Its subcellular location is the virion tegument. The protein localises to the virion membrane. The protein resides in the host cell membrane. It is found in the host Golgi apparatus membrane. Its function is as follows. Plays an important role in the cytoplasmic envelopment of tegument proteins and capsids during the assembly and egress processes. Also participates in viral entry at the fusion step probably by regulating the core fusion machinery. This is Cytoplasmic envelopment protein 3 from Human herpesvirus 1 (strain KOS) (HHV-1).